Reading from the N-terminus, the 252-residue chain is Adenosylcobinamide-GDP ribazoletransferase (252 aa).

The next 7 membrane-spanning stretches (helical) occupy residues 4–24 (LFKG…PYVE), 38–58 (PIIG…INYL), 60–80 (ISIV…TGML), 113–133 (FSVI…HSFL), 141–161 (ILMF…ITII), 190–210 (LVCI…LLIV), and 232–252 (VAGF…CLFT).

Belongs to the CobS family. Mg(2+) is required as a cofactor.

It is found in the cell membrane. The enzyme catalyses alpha-ribazole + adenosylcob(III)inamide-GDP = adenosylcob(III)alamin + GMP + H(+). It carries out the reaction alpha-ribazole 5'-phosphate + adenosylcob(III)inamide-GDP = adenosylcob(III)alamin 5'-phosphate + GMP + H(+). The protein operates within cofactor biosynthesis; adenosylcobalamin biosynthesis; adenosylcobalamin from cob(II)yrinate a,c-diamide: step 7/7. Functionally, joins adenosylcobinamide-GDP and alpha-ribazole to generate adenosylcobalamin (Ado-cobalamin). Also synthesizes adenosylcobalamin 5'-phosphate from adenosylcobinamide-GDP and alpha-ribazole 5'-phosphate. In Clostridium botulinum (strain Eklund 17B / Type B), this protein is Adenosylcobinamide-GDP ribazoletransferase.